The sequence spans 271 residues: MGIITNIAVQTKNPERFNVSIQKENGETLVFSVDQDVLLQFRLKKGMKIDEHSFQQIVYADEVKKTYHQALYFLSYRMRSEQEVVDYLKKKGASESIIDDVLHKLRENKYVDDREFAFAYVRTQKQTTAKGPYVIRKELEKLGVAEEWIEQSLAIYSFDEQVETAKSLYEKAKKQRAKQSLRQWKYQIGQLLYRKGFPQEVIDRVLLSERDEKEEQEWEALEYQGRKAHRRYEKYNSPMYEQKMKQALYRKGFPLEMIEQFLDKLKEGDKR.

It belongs to the RecX family.

The protein localises to the cytoplasm. Its function is as follows. Modulates RecA activity. The polypeptide is Regulatory protein RecX (Geobacillus sp. (strain WCH70)).